A 1019-amino-acid polypeptide reads, in one-letter code: MDSTGRAYDGASEFKSVLVTEGTSHYTPVEVYNILDELKTIKITSTIAEQSVVSRTPIPLSKIGLSDVKKLFDINVIKCGSSLRIVDEPQVTFIVSYAKDIYDKFMCIEHDSAYEPSLTMHRVRVIYSMLNDYCAKMISEVPYESSFVGELPVKSVTLNKLGDRNMDALAEHLLFEQDVVNAQRENRIFYQRKSAPAVPVTFGDDLEPAVRERANLYHRYSVPYHQIELALHALANDLLSIQYCHPTVVYNYLSSRAPNFLRLDDQVSLKLTSAGIGTLMPRPVVQLLDYDLVYMSPLALNNLASRLLRKISLHLVMQMVTAVQQDLGEVVSVSSNVTNPASACLVRMNVQGVQTLAVFIAQSMLNPNISYGMLSGLTLDCFSNFIYGACLMLFQALIPPSALTARQRLDINNRFAYFLIKCHATQATTASVVPNQVIYPVDAIDQWQSNRRDVLVAIYNNLLPGELVLSNLIQTYFRGNTAQQAAEILIPADQTSYGANETRALSAPYLFGAPINMLAPDARLSTYKRDLALPDRSPILITTVEGQNSISIEILRHKTGLIRAMYLNGFVTQPPAWIRNANSNTALLSRFLDVTPNLLGIYEAILANTYANAVNVYCDSVYRADIPTEWKLHQSVDPQDLLFGVFGIVPQYQILNEAVPDFFAGGEDILILQLIRAVYDTLSNKLGRNPADIFHLDEVFKVIEEIVSVLVQQKVDARKYFTESMRSGSFSKPRWDNFLRRPVAQRLPNLDSVIMTQADHVYNYMTQLTHIIPITDCFYIVKNSGFVDRGSTGPVMASSSVYENVLKVVHTIADFEAANALRLQRRSVDNTSYTDSLSDMFNGLRSISSSEFVRSVNGRSVFTEGRIDAIKVNMRVKFDLQFITEEGGYSKPPNVKKLMFSDFLSFLDSHKSDYRPPLLTVPITIGLNNLGETNSNTLRMRSEAIDEYFSSYVGAQILVPINVVDTRVYTEFSELRNFFTGDVVITDDPFDVWDGVKATYIPIGVHGVRLDPNGDQPPL.

Belongs to the phytoreovirus inner capsid protein P3 family. In terms of assembly, homodimer. Homomultimer.

The protein localises to the virion. It is found in the host cytoplasm. Its function is as follows. Capsid protein which self-assembles to form the inner icosahedral capsid with a T=2 symmetry, and consisting of 60 P3 dimers. The protein is Outer capsid protein P3 of Rice dwarf virus (isolate Fujian) (RDV).